Reading from the N-terminus, the 124-residue chain is MPAKQTSGKGAKKAGKAKGRPSGASKTRRRKRKESYGIYIYKVLKQVHPDTGISSKAMSIMNSFVNDVFERIAGEASRLSQYNKKSTISSREVQTAVRLLLPGELAKHAVSEGTKAVTKYTTSK.

The segment at 1 to 32 (MPAKQTSGKGAKKAGKAKGRPSGASKTRRRKR) is disordered. Positions 10 to 19 (GAKKAGKAKG) are enriched in basic residues. Residue S111 is glycosylated (O-linked (GlcNAc) serine). K119 participates in a covalent cross-link: Glycyl lysine isopeptide (Lys-Gly) (interchain with G-Cter in ubiquitin).

This sequence belongs to the histone H2B family. In terms of assembly, the nucleosome is a histone octamer containing two molecules each of H2A, H2B, H3 and H4 assembled in one H3-H4 heterotetramer and two H2A-H2B heterodimers. The octamer wraps approximately 147 bp of DNA. In terms of processing, monoubiquitination of Lys-119 gives a specific tag for epigenetic transcriptional activation and is also prerequisite for histone H3 'Lys-4' and 'Lys-79' methylation. Post-translationally, glcNAcylation at Ser-111 promotes monoubiquitination of Lys-119. It fluctuates in response to extracellular glucose, and associates with transcribed genes.

The protein localises to the nucleus. The protein resides in the chromosome. Its function is as follows. Core component of nucleosome. Nucleosomes wrap and compact DNA into chromatin, limiting DNA accessibility to the cellular machineries which require DNA as a template. Histones thereby play a central role in transcription regulation, DNA repair, DNA replication and chromosomal stability. DNA accessibility is regulated via a complex set of post-translational modifications of histones, also called histone code, and nucleosome remodeling. The sequence is that of Late histone H2B.2.2 from Psammechinus miliaris (Green sea urchin).